Consider the following 965-residue polypeptide: Glycine dehydrogenase (decarboxylating) (965 aa).

An N6-(pyridoxal phosphate)lysine modification is found at K711.

This sequence belongs to the GcvP family. The glycine cleavage system is composed of four proteins: P, T, L and H. Requires pyridoxal 5'-phosphate as cofactor.

It catalyses the reaction N(6)-[(R)-lipoyl]-L-lysyl-[glycine-cleavage complex H protein] + glycine + H(+) = N(6)-[(R)-S(8)-aminomethyldihydrolipoyl]-L-lysyl-[glycine-cleavage complex H protein] + CO2. Functionally, the glycine cleavage system catalyzes the degradation of glycine. The P protein binds the alpha-amino group of glycine through its pyridoxal phosphate cofactor; CO(2) is released and the remaining methylamine moiety is then transferred to the lipoamide cofactor of the H protein. This is Glycine dehydrogenase (decarboxylating) from Psychrobacter arcticus (strain DSM 17307 / VKM B-2377 / 273-4).